We begin with the raw amino-acid sequence, 236 residues long: Small ribosomal subunit protein uS2c (236 aa).

This sequence belongs to the universal ribosomal protein uS2 family.

It is found in the plastid. It localises to the chloroplast. This chain is Small ribosomal subunit protein uS2c (rps2), found in Oryza nivara (Indian wild rice).